A 258-amino-acid polypeptide reads, in one-letter code: Indole-3-glycerol phosphate synthase (258 aa).

Belongs to the TrpC family.

It carries out the reaction 1-(2-carboxyphenylamino)-1-deoxy-D-ribulose 5-phosphate + H(+) = (1S,2R)-1-C-(indol-3-yl)glycerol 3-phosphate + CO2 + H2O. The protein operates within amino-acid biosynthesis; L-tryptophan biosynthesis; L-tryptophan from chorismate: step 4/5. The protein is Indole-3-glycerol phosphate synthase of Chlorobium phaeobacteroides (strain DSM 266 / SMG 266 / 2430).